We begin with the raw amino-acid sequence, 335 residues long: Glycerol-3-phosphate dehydrogenase [NAD(P)+] (335 aa).

Residues Ser10, Phe11, Arg31, and Lys105 each contribute to the NADPH site. 3 residues coordinate sn-glycerol 3-phosphate: Lys105, Gly136, and Ser138. Ala140 lines the NADPH pocket. Sn-glycerol 3-phosphate contacts are provided by Lys191, Asp244, Ser254, Arg255, and Asn256. Catalysis depends on Lys191, which acts as the Proton acceptor. Residue Arg255 participates in NADPH binding. NADPH contacts are provided by Val279 and Glu281.

It belongs to the NAD-dependent glycerol-3-phosphate dehydrogenase family.

Its subcellular location is the cytoplasm. The enzyme catalyses sn-glycerol 3-phosphate + NAD(+) = dihydroxyacetone phosphate + NADH + H(+). It carries out the reaction sn-glycerol 3-phosphate + NADP(+) = dihydroxyacetone phosphate + NADPH + H(+). Its pathway is membrane lipid metabolism; glycerophospholipid metabolism. Its function is as follows. Catalyzes the reduction of the glycolytic intermediate dihydroxyacetone phosphate (DHAP) to sn-glycerol 3-phosphate (G3P), the key precursor for phospholipid synthesis. This is Glycerol-3-phosphate dehydrogenase [NAD(P)+] from Leptospira borgpetersenii serovar Hardjo-bovis (strain JB197).